We begin with the raw amino-acid sequence, 230 residues long: Orotidine 5'-phosphate decarboxylase (230 aa).

Substrate contacts are provided by residues Asp-10, Lys-32, 59 to 68, Thr-119, Arg-180, Gln-189, Gly-209, and Arg-210; that span reads DLKYHDIPNT. The Proton donor role is filled by Lys-61.

It belongs to the OMP decarboxylase family. Type 1 subfamily. Homodimer.

It catalyses the reaction orotidine 5'-phosphate + H(+) = UMP + CO2. Its pathway is pyrimidine metabolism; UMP biosynthesis via de novo pathway; UMP from orotate: step 2/2. Catalyzes the decarboxylation of orotidine 5'-monophosphate (OMP) to uridine 5'-monophosphate (UMP). This chain is Orotidine 5'-phosphate decarboxylase, found in Haemophilus influenzae (strain ATCC 51907 / DSM 11121 / KW20 / Rd).